Here is a 586-residue protein sequence, read N- to C-terminus: Phosphoenolpyruvate-protein phosphotransferase (586 aa).

Residue histidine 201 is the Tele-phosphohistidine intermediate of the active site. The phosphoenolpyruvate site is built by arginine 308 and arginine 345. Residues glutamate 446 and aspartate 470 each contribute to the Mg(2+) site. Phosphoenolpyruvate-binding positions include 469 to 470 (ND) and arginine 480. Catalysis depends on cysteine 517, which acts as the Proton donor.

The protein belongs to the PEP-utilizing enzyme family. As to quaternary structure, homodimer. Mg(2+) is required as a cofactor.

It localises to the cytoplasm. The catalysed reaction is L-histidyl-[protein] + phosphoenolpyruvate = N(pros)-phospho-L-histidyl-[protein] + pyruvate. In terms of biological role, general (non sugar-specific) component of the phosphoenolpyruvate-dependent sugar phosphotransferase system (sugar PTS). This major carbohydrate active-transport system catalyzes the phosphorylation of incoming sugar substrates concomitantly with their translocation across the cell membrane. Enzyme I transfers the phosphoryl group from phosphoenolpyruvate (PEP) to the phosphoryl carrier protein (HPr). The protein is Phosphoenolpyruvate-protein phosphotransferase of Cupriavidus necator (strain ATCC 17699 / DSM 428 / KCTC 22496 / NCIMB 10442 / H16 / Stanier 337) (Ralstonia eutropha).